Reading from the N-terminus, the 358-residue chain is Peptide chain release factor 1 (358 aa).

Gln237 carries the N5-methylglutamine modification.

This sequence belongs to the prokaryotic/mitochondrial release factor family. In terms of processing, methylated by PrmC. Methylation increases the termination efficiency of RF1.

Its subcellular location is the cytoplasm. Functionally, peptide chain release factor 1 directs the termination of translation in response to the peptide chain termination codons UAG and UAA. This is Peptide chain release factor 1 from Streptomyces avermitilis (strain ATCC 31267 / DSM 46492 / JCM 5070 / NBRC 14893 / NCIMB 12804 / NRRL 8165 / MA-4680).